Reading from the N-terminus, the 112-residue chain is ATP synthase epsilon chain (112 aa).

Belongs to the ATPase epsilon chain family. In terms of assembly, F-type ATPases have 2 components, CF(1) - the catalytic core - and CF(0) - the membrane proton channel. CF(1) has five subunits: alpha(3), beta(3), gamma(1), delta(1), epsilon(1). CF(0) has three main subunits: a, b and c.

Its subcellular location is the cell inner membrane. In terms of biological role, produces ATP from ADP in the presence of a proton gradient across the membrane. This is ATP synthase epsilon chain from Rickettsia felis (strain ATCC VR-1525 / URRWXCal2) (Rickettsia azadi).